The primary structure comprises 682 residues: Potassium-transporting ATPase ATP-binding subunit (682 aa).

A run of 4 helical transmembrane segments spans residues 34–54 (PVMF…IAMA), 62–82 (ALFS…ANFA), 219–239 (IALT…TATL), and 254–274 (VLVA…LSAI). The 4-aspartylphosphate intermediate role is filled by Asp-307. ATP is bound by residues Asp-344, Glu-348, 377–384 (FTAQSRMS), and Lys-395. Mg(2+) is bound by residues Asp-518 and Asp-522. 3 consecutive transmembrane segments (helical) span residues 588-608 (FAII…LNIM), 616-636 (AILS…PLAL), and 656-676 (IYGL…DLLL).

This sequence belongs to the cation transport ATPase (P-type) (TC 3.A.3) family. Type IA subfamily. The system is composed of three essential subunits: KdpA, KdpB and KdpC.

The protein localises to the cell inner membrane. The enzyme catalyses K(+)(out) + ATP + H2O = K(+)(in) + ADP + phosphate + H(+). In terms of biological role, part of the high-affinity ATP-driven potassium transport (or Kdp) system, which catalyzes the hydrolysis of ATP coupled with the electrogenic transport of potassium into the cytoplasm. This subunit is responsible for energy coupling to the transport system and for the release of the potassium ions to the cytoplasm. The polypeptide is Potassium-transporting ATPase ATP-binding subunit (Escherichia coli O6:K15:H31 (strain 536 / UPEC)).